Here is a 224-residue protein sequence, read N- to C-terminus: MNSLWPLLRLASPQLPIGAYTYSQGLESAIDQGIVWDADSVRLWLSDQLAMNIACFEAPLFARMLEAAAQGQWQQLFYWAEEYVASRETRELYQESRQMGFSLVQLLNDLPELDEAMRHQLLGFVEPPLPLVWAVAARTWNLDTRSAVAAWLWGWLENQLAALMKALPLGQQAAQRLLSQLLPELDEALETALACSDEQLANGTLGLSIASMIHETQYTRLFRS.

The protein belongs to the UreF family. In terms of assembly, ureD, UreF and UreG form a complex that acts as a GTP-hydrolysis-dependent molecular chaperone, activating the urease apoprotein by helping to assemble the nickel containing metallocenter of UreC. The UreE protein probably delivers the nickel.

The protein resides in the cytoplasm. Required for maturation of urease via the functional incorporation of the urease nickel metallocenter. In Nitrosococcus oceani (strain ATCC 19707 / BCRC 17464 / JCM 30415 / NCIMB 11848 / C-107), this protein is Urease accessory protein UreF.